We begin with the raw amino-acid sequence, 368 residues long: Ferrochelatase (368 aa).

Positions 209 and 290 each coordinate Fe cation. Residues 341–368 (ADLGGGREATGQAAERSRQRALALGAKQ) are disordered.

Belongs to the ferrochelatase family.

It localises to the cytoplasm. The enzyme catalyses heme b + 2 H(+) = protoporphyrin IX + Fe(2+). The protein operates within porphyrin-containing compound metabolism; protoheme biosynthesis; protoheme from protoporphyrin-IX: step 1/1. Functionally, catalyzes the ferrous insertion into protoporphyrin IX. The protein is Ferrochelatase of Nitrosococcus oceani (strain ATCC 19707 / BCRC 17464 / JCM 30415 / NCIMB 11848 / C-107).